Here is a 336-residue protein sequence, read N- to C-terminus: Mitochondrial fission regulator 2 (336 aa).

The stretch at 139-166 forms a coiled coil; that stretch reads QPDALLKISALEEELQRLRAQIATIITA. The tract at residues 296–336 is disordered; that stretch reads HRQRDDSFGKENHSAEPSPFSSPDTPRIFQHTRRSQGRIHL. Residues 297–309 show a composition bias toward basic and acidic residues; the sequence is RQRDDSFGKENHS. Residues 325 to 336 show a composition bias toward basic residues; it reads QHTRRSQGRIHL.

This sequence belongs to the MTFR1 family.

Its subcellular location is the mitochondrion. May play a role in mitochondrial aerobic respiration. Can also promote mitochondrial fission. The protein is Mitochondrial fission regulator 2 (mtfr2) of Danio rerio (Zebrafish).